We begin with the raw amino-acid sequence, 662 residues long: Glycogen debranching enzyme (662 aa).

Aspartate 338 functions as the Nucleophile in the catalytic mechanism. Residue glutamate 373 is the Proton donor of the active site.

The protein belongs to the glycosyl hydrolase 13 family.

It catalyses the reaction Hydrolysis of (1-&gt;6)-alpha-D-glucosidic linkages to branches with degrees of polymerization of three or four glucose residues in limit dextrin.. Its pathway is glycan degradation; glycogen degradation. Functionally, removes maltotriose and maltotetraose chains that are attached by 1,6-alpha-linkage to the limit dextrin main chain, generating a debranched limit dextrin. The chain is Glycogen debranching enzyme from Yersinia pseudotuberculosis serotype IB (strain PB1/+).